The primary structure comprises 84 residues: Putative defensin-like protein 101 (84 aa).

The first 27 residues, 1–27 (MDITKNIVTLLLVVLFPILFYYNNVLA), serve as a signal peptide directing secretion. 4 cysteine pairs are disulfide-bonded: Cys-39/Cys-81, Cys-43/Cys-67, Cys-52/Cys-79, and Cys-56/Cys-80.

It belongs to the DEFL family.

The protein resides in the secreted. In Arabidopsis thaliana (Mouse-ear cress), this protein is Putative defensin-like protein 101.